The chain runs to 600 residues: MRIKKKGTSGNAKNFITRTQAVKKLQVSLADFRRLCIFKGIYPREPRNKKKANKGSTAPVTFYYTKDIQYLLHEPVLGKFREHKTFAKKLQRALGRGEVSDAQKLEGNRPKYTLEHIIKERYPTFLDALRDIDDPLNMLFLFANMPATDKVSHRITKEAEKLTNQWLAYVAKERLIKKVFVSIKGVYYQANVKGQEVRWLVPFKFPTNIPTDVDFRIMLTFLEFYSTLLHFVLFRLYNDANLIYPPTIDTEKLKGIGGLSSYVLQSKDQGVKALLPNAKKAADSKDESKKVKETKLSKEEISKAVAADKSLNENAEDNVSENVEDVELDEFSSTNKTAGDLLSQPSKFASPTSTLLSKFIFYVGREVPLDILEFCILSCGGSIISEIALDELQLNQPEEYKKLDLSNITHQIVDRPTVASKVAGRTYVQPQWVFDCLNKSELLPVSQYAPGETLPPHLSPWGDAGGYNPDAEVKPTEQGEEEEEEEEEIEGDEIEEDVEEEDEEEDEDLQAQKELELEAAGVKSADAQKKDKKSSKGKKRSAEDEEKDLKKIMMSNKQRKLYKKMQYGIDKKEARQDDLTKKRRKLEKTKAELGKLNKKN.

In terms of domain architecture, BRCT spans 351 to 450; sequence PTSTLLSKFI…ELLPVSQYAP (100 aa). Residues 454–600 form a disordered region; that stretch reads LPPHLSPWGD…AELGKLNKKN (147 aa). Residues 478 to 509 show a composition bias toward acidic residues; it reads QGEEEEEEEEEIEGDEIEEDVEEEDEEEDEDL. The stretch at 478–600 forms a coiled coil; it reads QGEEEEEEEE…AELGKLNKKN (123 aa). Residues 530–539 show a composition bias toward basic residues; it reads KDKKSSKGKK. 2 stretches are compositionally biased toward basic and acidic residues: residues 569 to 580 and 588 to 600; these read IDKKEARQDDLT and KTKA…NKKN.

The protein belongs to the pescadillo family. In terms of assembly, component of the NOP7 complex, composed of ERB1, NOP7 and YTM1. The complex is held together by ERB1, which interacts with NOP7 via its N-terminal domain and with YTM1 via a high-affinity interaction between the seven-bladed beta-propeller domains of the 2 proteins. The NOP7 complex associates with the 66S pre-ribosome.

It is found in the nucleus. The protein resides in the nucleolus. The protein localises to the nucleoplasm. In terms of biological role, component of the NOP7 complex, which is required for maturation of the 25S and 5.8S ribosomal RNAs and formation of the 60S ribosome. This Debaryomyces hansenii (strain ATCC 36239 / CBS 767 / BCRC 21394 / JCM 1990 / NBRC 0083 / IGC 2968) (Yeast) protein is Pescadillo homolog.